The primary structure comprises 226 residues: Probable chemoreceptor glutamine deamidase CheD (226 aa).

A disordered region spans residues 207–226 (PGGMRVERFDTPSRRDPVGA).

The protein belongs to the CheD family.

The enzyme catalyses L-glutaminyl-[protein] + H2O = L-glutamyl-[protein] + NH4(+). Its function is as follows. Probably deamidates glutamine residues to glutamate on methyl-accepting chemotaxis receptors (MCPs), playing an important role in chemotaxis. This Bordetella bronchiseptica (strain ATCC BAA-588 / NCTC 13252 / RB50) (Alcaligenes bronchisepticus) protein is Probable chemoreceptor glutamine deamidase CheD.